A 260-amino-acid polypeptide reads, in one-letter code: PHD finger protein ALFIN-LIKE 5 (260 aa).

Methionine 1 bears the N-acetylmethionine mark. The disordered stretch occupies residues 142–203 (AEKQTKEMPS…EEDEDEDEHG (62 aa)). Over residues 148–165 (EMPSSANQNGNRSKSNSK) the composition is skewed to polar residues. A compositionally biased stretch (basic and acidic residues) spans 167–181 (RGLESKSSKTIHAKD). Residues 182 to 202 (EEEGLELEEGEEEEDEDEDEH) are compositionally biased toward acidic residues. The PHD-type zinc-finger motif lies at 204-256 (ETLCGACGDNYASDEFWICCDMCEKWFHGECVKITPARAEHIKHYKCPTCSNK).

Belongs to the Alfin family. In terms of assembly, interacts with H3K4me3 and to a lesser extent with H3K4me2. In terms of tissue distribution, ubiquitously expressed.

The protein localises to the nucleus. Its function is as follows. Histone-binding component that specifically recognizes H3 tails trimethylated on 'Lys-4' (H3K4me3), which mark transcription start sites of virtually all active genes. This Arabidopsis thaliana (Mouse-ear cress) protein is PHD finger protein ALFIN-LIKE 5 (AL5).